The following is a 108-amino-acid chain: UPF0102 protein SO_0299 (108 aa).

It belongs to the UPF0102 family.

This is UPF0102 protein SO_0299 from Shewanella oneidensis (strain ATCC 700550 / JCM 31522 / CIP 106686 / LMG 19005 / NCIMB 14063 / MR-1).